Here is a 229-residue protein sequence, read N- to C-terminus: NAD(P)H-hydrate epimerase (229 aa).

The 208-residue stretch at 9-216 (AISVDEELFN…KLEEKYAMNL (208 aa)) folds into the YjeF N-terminal domain. 59 to 63 (NNGGD) serves as a coordination point for (6S)-NADPHX. Positions 60 and 124 each coordinate K(+). (6S)-NADPHX contacts are provided by residues 128-134 (GFSFKPP) and Asp-157. Residue Ser-160 coordinates K(+).

The protein belongs to the NnrE/AIBP family. The cofactor is K(+).

It carries out the reaction (6R)-NADHX = (6S)-NADHX. It catalyses the reaction (6R)-NADPHX = (6S)-NADPHX. Catalyzes the epimerization of the S- and R-forms of NAD(P)HX, a damaged form of NAD(P)H that is a result of enzymatic or heat-dependent hydration. This is a prerequisite for the S-specific NAD(P)H-hydrate dehydratase to allow the repair of both epimers of NAD(P)HX. The sequence is that of NAD(P)H-hydrate epimerase from Anopheles gambiae (African malaria mosquito).